The sequence spans 488 residues: Thiamine transporter 2 (488 aa).

The Cytoplasmic portion of the chain corresponds to 1 to 8 (MDSSCRTP). A helical membrane pass occupies residues 9 to 29 (PSNSWVYPTVILCLFGFFSMF). The Extracellular portion of the chain corresponds to 30–54 (RPSEAFLIPFLSEPSKNLTSPEMTN). Asparagine 46 is a glycosylation site (N-linked (GlcNAc...) asparagine). The chain crosses the membrane as a helical span at residues 55 to 75 (EILPVWTYSYLATLPPVFVLT). Topologically, residues 76–82 (DYLRYKP) are cytoplasmic. A helical transmembrane segment spans residues 83 to 103 (VIMLHVVAFATSYLFLLFGQG). The Extracellular segment spans residues 104 to 111 (VMLMQTAE). The helical transmembrane segment at 112–132 (FFFGVVSATEIAYFAYIYSMV) threads the bilayer. Topologically, residues 133-145 (SPEHYQKVSSYCR) are cytoplasmic. Residues 146-166 (SITLVAYTAGSVLAQLLVSLT) form a helical membrane-spanning segment. Residues 167 to 172 (NLPYSS) are Extracellular-facing. The chain crosses the membrane as a helical span at residues 173-193 (LFYISLACVSVAFFFSLFLPM). The Cytoplasmic portion of the chain corresponds to 194 to 276 (PKKSMFFHAK…YSSKHLVYWS (83 aa)). The helical transmembrane segment at 277-297 (LWWAFATAGYNQILNYVQVLW) threads the bilayer. Residues 298–310 (EHKAPSQDSSIYN) are Extracellular-facing. Residues 311-331 (GAVEAIATFGGALASFSVGYL) form a helical membrane-spanning segment. Residues 332 to 335 (KVNW) lie on the Cytoplasmic side of the membrane. A helical transmembrane segment spans residues 336–356 (DLLGELGLAVFSAVIAGSLFL). The Extracellular portion of the chain corresponds to 357–369 (MNYSRSIWVCYAG). A glycan (N-linked (GlcNAc...) asparagine) is linked at asparagine 358. The chain crosses the membrane as a helical span at residues 370 to 390 (YLLVKSSYSFLITIAVFQIAV). At 391-399 (NLSLERYAL) the chain is on the cytoplasmic side. The chain crosses the membrane as a helical span at residues 400-420 (VFGIDTFIALVIQTIMTMIVV). Residues 421–428 (DQRGLQLP) are Extracellular-facing. The chain crosses the membrane as a helical span at residues 429–449 (VTTQFLVYGSYFAVIAGVFLM). Topologically, residues 450–488 (RSIYILCSAKCRKEVQNLATTRSPNEPHPQEPSNVSTKF) are cytoplasmic. The interval 469 to 488 (TTRSPNEPHPQEPSNVSTKF) is disordered.

This sequence belongs to the reduced folate carrier (RFC) transporter (TC 2.A.48) family. As to expression, high expression in kidney, brain, lung and small intestine. Detected in pancreatic acinar cells (at protein level). Also expressed strongly in pancreatic islet cells.

Its subcellular location is the membrane. It catalyses the reaction thiamine(out) + H(+)(in) = thiamine(in) + H(+)(out). Functionally, high-affinity transporter for the intake of thiamine. Unlike the human ortholog, lacks H(+)-dependent pyridoxine transport activity due to an absence of seven critical amino-acids required for pyridoxine transport. In Mus musculus (Mouse), this protein is Thiamine transporter 2 (Slc19a3).